The following is a 104-amino-acid chain: MSEKINANQDNDRQITLVDEQGNEELFEILFTFTSEDYGKSYVLLYPAAVSDDDDVEVQAFSYDADADGDVTSSDLHEITDDDEWNMVQGVLNTFLSDDRLSGE.

Belongs to the UPF0473 family.

The protein is UPF0473 protein LJ_0477 of Lactobacillus johnsonii (strain CNCM I-12250 / La1 / NCC 533).